We begin with the raw amino-acid sequence, 406 residues long: Magnesium transporter NIPA4 (406 aa).

Residues 1–57 (MELRVANANGSCENGSIVSLYCSSQEVLCQIVRGISPEEPYNATLITWQERVRKKYG) are Extracellular-facing. Residues Asn9, Asn14, and Asn42 are each glycosylated (N-linked (GlcNAc...) asparagine). The helical transmembrane segment at 58-78 (FYIGVGLAFLSCFLIGTSVIL) threads the bilayer. Over 79-126 (KKKGLIRLVATGATRAVNGGYGYLKDPMWWAGMATMSAGEVANFGAYA) the chain is Cytoplasmic. Residues 127–147 (FAPATVVTPLGALSVLISAIF) traverse the membrane as a helical segment. Topologically, residues 148-155 (SSYCLGES) are extracellular. A helical transmembrane segment spans residues 156–176 (LNLLGKLGCVICMAGSTVMVI). Topologically, residues 177-197 (HAPKEEKVTTVAEMASKMKDT) are cytoplasmic. A helical membrane pass occupies residues 198-218 (GFIVFAVLLVVSCLILIFIVA). Residues 219 to 225 (PRYGQRN) lie on the Extracellular side of the membrane. Residues 226-246 (ILIYIIICSVIGSFSVTAVKG) form a helical membrane-spanning segment. The Cytoplasmic portion of the chain corresponds to 247–263 (LGVTIRNFFQGLPVVRH). A helical membrane pass occupies residues 264 to 284 (PLPYILSLILGLSIIIQVNFL). At 285–295 (NRALDIFNTSL) the chain is on the extracellular side. N-linked (GlcNAc...) asparagine glycosylation is present at Asn292. A helical transmembrane segment spans residues 296–316 (VFPIYYVFFTTVVVASSIVLF). The Cytoplasmic segment spans residues 317–326 (KEWYTMSAVD). The chain crosses the membrane as a helical span at residues 327-347 (IVGTLSGFVTIILGVFMLHAF). Residues 348-406 (KDLDINQISLPHTHKNPTPAPAPEPTVIKLEDKNVLVDNIELASTPSPQQKPKVFMTDS) lie on the Extracellular side of the membrane.

It belongs to the NIPA family.

Its subcellular location is the cell membrane. The enzyme catalyses Mg(2+)(in) = Mg(2+)(out). Acts as a Mg(2+) transporter. Can also transport other divalent cations such as Ba(2+), Sr(2+) and Fe(2+) but to a much less extent than Mg(2+). May be a receptor for ligands (trioxilins A3 and B3) from the hepoxilin pathway. The sequence is that of Magnesium transporter NIPA4 (Nipal4) from Mus musculus (Mouse).